We begin with the raw amino-acid sequence, 116 residues long: MKNIFFSVFFLLSFLLCLANVSEAAVPCSTVDMKAAACVGFATGKDSKPSSACCTGLQQLAQTVKSVDDKKAICRCLKASSKSLGIKDQFLSKIPAACNIKVGFPVSTATNCETIH.

The first 24 residues, 1-24 (MKNIFFSVFFLLSFLLCLANVSEA), serve as a signal peptide directing secretion. 4 cysteine pairs are disulfide-bonded: Cys-28/Cys-76, Cys-38/Cys-53, Cys-54/Cys-98, and Cys-74/Cys-112.

Belongs to the plant LTP family.

Its function is as follows. Plant non-specific lipid-transfer proteins transfer phospholipids as well as galactolipids across membranes. May play a role in wax or cutin deposition in the cell walls of expanding epidermal cells and certain secretory tissues. This Ricinus communis (Castor bean) protein is Non-specific lipid-transfer protein D, cotyledon-specific isoform.